The chain runs to 382 residues: 4-hydroxy-3-methylbut-2-en-1-yl diphosphate synthase (flavodoxin) (382 aa).

[4Fe-4S] cluster contacts are provided by C273, C276, C308, and E315.

It belongs to the IspG family. It depends on [4Fe-4S] cluster as a cofactor.

The enzyme catalyses (2E)-4-hydroxy-3-methylbut-2-enyl diphosphate + oxidized [flavodoxin] + H2O + 2 H(+) = 2-C-methyl-D-erythritol 2,4-cyclic diphosphate + reduced [flavodoxin]. It participates in isoprenoid biosynthesis; isopentenyl diphosphate biosynthesis via DXP pathway; isopentenyl diphosphate from 1-deoxy-D-xylulose 5-phosphate: step 5/6. Its function is as follows. Converts 2C-methyl-D-erythritol 2,4-cyclodiphosphate (ME-2,4cPP) into 1-hydroxy-2-methyl-2-(E)-butenyl 4-diphosphate. This Gluconacetobacter diazotrophicus (strain ATCC 49037 / DSM 5601 / CCUG 37298 / CIP 103539 / LMG 7603 / PAl5) protein is 4-hydroxy-3-methylbut-2-en-1-yl diphosphate synthase (flavodoxin).